The primary structure comprises 443 residues: Monooxygenase asqM (443 aa).

This sequence belongs to the aromatic-ring hydroxylase family. The cofactor is FAD.

It functions in the pathway secondary metabolite biosynthesis. It participates in alkaloid biosynthesis. The protein operates within mycotoxin biosynthesis. Monooxygenase; part of the gene cluster that mediates the biosynthesis of the aspoquinolone mycotoxins. The role of asqM within the aspoquinolone pathway has still to be determined. The first step of the pathway is catalyzed by the nonribosomal peptide synthetase asqK that condenses anthranilic acid and O-methyl-L-tyrosine to produce 4'-methoxycyclopeptin. 4'-methoxycyclopeptin is then converted to 4'-methoxydehydrocyclopeptin by the ketoglutarate-dependent dioxygenase asqJ. AsqJ also converts its first product 4'-methoxydehydrocyclopeptin to 4'-methoxycyclopenin. The following conversion of 4'-methoxycyclopenin into 4'-methoxyviridicatin is catalyzed by the cyclopenase asqI. 4'-methoxyviridicatin is the precursor of quinolone natural products, and is further converted to quinolinone B. The prenyltransferase asqH1 then catalyzes the canonical Friedel-Crafts alkylation of quinolinone B with dimethylallyl cation to yield dimethylallyl quinolone, which is subjected to FAD-dependent dehydrogenation by the FAD-linked oxidoreductase asqF to yield conjugated aryl diene. The delta(3') double bond then serves as the site of the second alkylation with DMAPP catalyzed by the prenyltransferase asqH2 to yield a carbenium ion intermediate, which can be attacked by H(2)O to yield a styrenyl quinolone containing a C3'-hydroxyprenyl chain. The FAD-dependent monooxygenase asqG performs epoxidation of the terminal C7'-C8' olefin. Finally, after dehydratation of the epoxide at C3 by asqC, the quinolone epoxide rearrangement protein asqO catalyzes an enzymatic 3-exo-tet cyclization to yield the cyclopropyl-THF ring system in aspoquinolone. In Emericella nidulans (strain FGSC A4 / ATCC 38163 / CBS 112.46 / NRRL 194 / M139) (Aspergillus nidulans), this protein is Monooxygenase asqM.